The chain runs to 115 residues: Large ribosomal subunit protein uL18 (115 aa).

Residues 1–29 (MISKPDKNKLRQKRHTRVRGKISGTSETP) form a disordered region. Residues 10–20 (LRQKRHTRVRG) show a composition bias toward basic residues.

The protein belongs to the universal ribosomal protein uL18 family. In terms of assembly, part of the 50S ribosomal subunit; part of the 5S rRNA/L5/L18/L25 subcomplex. Contacts the 5S and 23S rRNAs.

Functionally, this is one of the proteins that bind and probably mediate the attachment of the 5S RNA into the large ribosomal subunit, where it forms part of the central protuberance. In Lactococcus lactis subsp. lactis (strain IL1403) (Streptococcus lactis), this protein is Large ribosomal subunit protein uL18.